A 288-amino-acid chain; its full sequence is Nucleotide-binding protein ASA_0318 (288 aa).

8–15 lines the ATP pocket; it reads GRSGSGKT. Residue 56 to 59 coordinates GTP; that stretch reads DVRN.

Belongs to the RapZ-like family.

In terms of biological role, displays ATPase and GTPase activities. This chain is Nucleotide-binding protein ASA_0318, found in Aeromonas salmonicida (strain A449).